A 528-amino-acid chain; its full sequence is Glucose-6-phosphate isomerase (528 aa).

Glu322 serves as the catalytic Proton donor. Residues His351 and Lys455 contribute to the active site.

It belongs to the GPI family.

It localises to the cytoplasm. It catalyses the reaction alpha-D-glucose 6-phosphate = beta-D-fructose 6-phosphate. It functions in the pathway carbohydrate biosynthesis; gluconeogenesis. Its pathway is carbohydrate degradation; glycolysis; D-glyceraldehyde 3-phosphate and glycerone phosphate from D-glucose: step 2/4. Its function is as follows. Catalyzes the reversible isomerization of glucose-6-phosphate to fructose-6-phosphate. The polypeptide is Glucose-6-phosphate isomerase (Nostoc sp. (strain PCC 7120 / SAG 25.82 / UTEX 2576)).